The following is a 506-amino-acid chain: Hippocampus abundant transcript-like protein 1 (506 aa).

The segment at 1-25 (MSVEPPPELEEKAASEPEAGAMPEK) is disordered. The Extracellular portion of the chain corresponds to 1–49 (MSVEPPPELEEKAASEPEAGAMPEKRAGAQAAGSTWLQGFGRPSVYHAA). Residues 50–70 (IVIFLEFFAWGLLTTPMLTVL) traverse the membrane as a helical segment. Topologically, residues 71–82 (HETFSQHTFLMN) are cytoplasmic. The helical transmembrane segment at 83–103 (GLIQGVKGLLSFLSAPLIGAL) threads the bilayer. Over 104–111 (SDVWGRKP) the chain is Extracellular. A helical membrane pass occupies residues 112–132 (FLLGTVFFTCFPIPLMRISPW). Topologically, residues 133-134 (WY) are cytoplasmic. The helical transmembrane segment at 135-155 (FAMISVSGVFSVTFSVIFAYV) threads the bilayer. Topologically, residues 156 to 168 (ADVTQEHERSTAY) are extracellular. The helical transmembrane segment at 169 to 189 (GWVSATFAASLVSSPAIGAYL) threads the bilayer. The Cytoplasmic portion of the chain corresponds to 190–196 (SASYGDS). A helical membrane pass occupies residues 197 to 217 (LVVLVATVVALLDICFILVAV). The Extracellular segment spans residues 218–255 (PESLPEKMRPVSWGAQISWKQADPFASLKKVGKDSTVL). A helical transmembrane segment spans residues 256 to 276 (LICITVFLSYLPEAGQYSSFF). The Cytoplasmic segment spans residues 277–281 (LYLRQ). The chain crosses the membrane as a helical span at residues 282-302 (VIGFGSVKIAAFIAMVGILSI). The Extracellular portion of the chain corresponds to 303-319 (VAQTAFLSILMRSLGNK). Residues 320 to 340 (NTVLLGLGFQMLQLAWYGFGS) form a helical membrane-spanning segment. Residue glutamine 341 is a topological domain, cytoplasmic. The chain crosses the membrane as a helical span at residues 342–362 (AWMMWAAGTVAAMSSITFPAI). Residues 363-387 (SALVSRNAESDQQGVAQGIITGIRG) lie on the Extracellular side of the membrane. The chain crosses the membrane as a helical span at residues 388–408 (LCNGLGPALYGFIFYMFHVEL). Over 409–428 (TELGPKLNSNNVPLQGAVIP) the chain is Cytoplasmic. A helical membrane pass occupies residues 429–449 (GPPFLFGACIVLMSFLVALFI). The Extracellular portion of the chain corresponds to 450 to 506 (PEYSKASGVQKHSNSSSGSLTNTPERGSDEDIEPLLQDSSIWELSSFEEPGNQCTEL). The interval 457–481 (GVQKHSNSSSGSLTNTPERGSDEDI) is disordered. The span at 459–474 (QKHSNSSSGSLTNTPE) shows a compositional bias: polar residues. Asparagine 463 is a glycosylation site (N-linked (GlcNAc...) asparagine).

Belongs to the major facilitator superfamily.

It is found in the membrane. The protein is Hippocampus abundant transcript-like protein 1 of Homo sapiens (Human).